We begin with the raw amino-acid sequence, 149 residues long: Large ribosomal subunit protein uL13 (149 aa).

It belongs to the universal ribosomal protein uL13 family. In terms of assembly, part of the 50S ribosomal subunit.

Functionally, this protein is one of the early assembly proteins of the 50S ribosomal subunit, although it is not seen to bind rRNA by itself. It is important during the early stages of 50S assembly. This chain is Large ribosomal subunit protein uL13, found in Saccharolobus solfataricus (strain ATCC 35092 / DSM 1617 / JCM 11322 / P2) (Sulfolobus solfataricus).